Reading from the N-terminus, the 465-residue chain is Serine/threonine-protein kinase 38 (465 aa).

Ala2 carries the N-acetylalanine modification. The segment at 62 to 87 (KRLRRSAHARKETEFLRLKRTRLGLE) is interaction with S100B. Thr74 is modified (phosphothreonine). One can recognise a Protein kinase domain in the interval 89–382 (FESLKVIGRG…VEEIKSNSFF (294 aa)). ATP is bound by residues 95-103 (IGRGAFGEV) and Lys118. Asp212 (proton acceptor) is an active-site residue. Ser264 is subject to Phosphoserine. A Phosphoserine; by autocatalysis modification is found at Ser281. Positions 306-311 (WSLGVI) match the UFM1-interacting motif (UFIM) motif. The AGC-kinase C-terminal domain occupies 383-455 (EGVDWEHIRE…KRFEGLTARG (73 aa)). Thr444 is subject to Phosphothreonine; by STK24/MST3.

It belongs to the protein kinase superfamily. AGC Ser/Thr protein kinase family. As to quaternary structure, homodimeric S100B binds two molecules of STK38. Interacts with MOB1 and MOB2. Interacts with MAP3K1 and MAP3K2 (via the kinase catalytic domain). Forms a tripartite complex with MOBKL1B and STK3/MST2. Interacts with MICAL1; leading to inhibit the protein kinase activity by antagonizing activation by MST1/STK4. It depends on Mg(2+) as a cofactor. ISGylated. Post-translationally, phosphorylated by STK3/MST2 and this is enhanced by MOBKL1B. As to expression, ubiquitously expressed with highest levels observed in peripheral blood leukocytes.

It is found in the nucleus. The protein resides in the cytoplasm. It localises to the chromosome. The catalysed reaction is L-seryl-[protein] + ATP = O-phospho-L-seryl-[protein] + ADP + H(+). It catalyses the reaction L-threonyl-[protein] + ATP = O-phospho-L-threonyl-[protein] + ADP + H(+). Activated by binding of S100B which releases autoinhibitory N-lobe interactions, enabling ATP to bind and the autophosphorylation of Ser-281. Thr-444 then undergoes calcium-dependent phosphorylation by STK24/MST3. Interactions between phosphorylated Thr-444 and the N-lobe promote additional structural changes that complete the activation of the kinase. Autoinhibition is also released by the binding of MOB1/MOBKL1A and MOB2/HCCA2 to the N-terminal of STK38. Serine/threonine-protein kinase that acts as a negative regulator of MAP3K1/2 signaling. Converts MAP3K2 from its phosphorylated form to its non-phosphorylated form and inhibits autophosphorylation of MAP3K2. Acts as an ufmylation 'reader' in a kinase-independent manner: specifically recognizes and binds mono-ufmylated histone H4 in response to DNA damage, promoting the recruitment of SUV39H1 to the double-strand breaks, resulting in ATM activation. The sequence is that of Serine/threonine-protein kinase 38 from Homo sapiens (Human).